Here is a 508-residue protein sequence, read N- to C-terminus: Photosystem II CP47 reaction center protein (508 aa).

The next 6 helical transmembrane spans lie at 21–36 (SVHIMHTALVAGWAGS), 101–115 (IVFSGLCFLAAIWHW), 140–156 (GIHLFLSGVACFGFGAF), 203–218 (IAAGTLGILAGLFHLS), 237–252 (VLSSSIAAVFFAAFVV), and 457–472 (SFALLFFFGHIWHGSR).

It belongs to the PsbB/PsbC family. PsbB subfamily. In terms of assembly, PSII is composed of 1 copy each of membrane proteins PsbA, PsbB, PsbC, PsbD, PsbE, PsbF, PsbH, PsbI, PsbJ, PsbK, PsbL, PsbM, PsbT, PsbX, PsbY, PsbZ, Psb30/Ycf12, at least 3 peripheral proteins of the oxygen-evolving complex and a large number of cofactors. It forms dimeric complexes. The cofactor is Binds multiple chlorophylls. PSII binds additional chlorophylls, carotenoids and specific lipids..

The protein localises to the plastid. The protein resides in the chloroplast thylakoid membrane. In terms of biological role, one of the components of the core complex of photosystem II (PSII). It binds chlorophyll and helps catalyze the primary light-induced photochemical processes of PSII. PSII is a light-driven water:plastoquinone oxidoreductase, using light energy to abstract electrons from H(2)O, generating O(2) and a proton gradient subsequently used for ATP formation. This is Photosystem II CP47 reaction center protein from Lepidium virginicum (Virginia pepperweed).